Here is a 432-residue protein sequence, read N- to C-terminus: MRVVLIDGEHYPDVTKWAIHKLGDVCCAVFLGGTEKIGSLKALEDKIGVPLYHSPNYLDALKRAVLENDVEEVVDLSDEPVLTYEDRFRIASLCMLLGVTYRGADFTFTPKPLKKTKKPSISIIGTGKRVGKTAVSGFVARTLKEVARPVVVTMGRGGPEEPELIEGEKIELTPQFLLKVAKEGKHAASDHFEDALTSRVTTIGCRRCGGGMAGFPFFDVVDKGVELAESLPHDLIILEGSGATFPAYRTDAYILIIGGRQKTDFLRGYFGPFRIALADLIIVTMSDEINPEKRAEIRKIVEEINPKADLHFTAFRPRPLGNISGKKLGLVMTSQSALPKAKEHLEGLGAEVVATSGNLSNRPKLREDLEKFRGIDAVAVELKAAAVDVVTKWALERGIEVIYLDNEPVNIDGKDLRKSVLELGKRVLGRRA.

It belongs to the cyclic 2,3-diphosphoglycerate synthetase family.

It localises to the cytoplasm. The catalysed reaction is (2R)-2,3-bisphosphoglycerate + ATP + H(+) = cyclic (2R)-2,3-bisphosphoglycerate + ADP + phosphate. Functionally, catalyzes the formation of cyclic 2,3-diphosphoglycerate (cDPG) by formation of an intramolecular phosphoanhydride bond at the expense of ATP. The protein is Cyclic 2,3-diphosphoglycerate synthetase of Thermococcus kodakarensis (strain ATCC BAA-918 / JCM 12380 / KOD1) (Pyrococcus kodakaraensis (strain KOD1)).